We begin with the raw amino-acid sequence, 446 residues long: DDB1- and CUL4-associated factor 12-A (446 aa).

Residues 1-12 (MTRRSVSRKRRA) show a composition bias toward basic residues. The segment at 1-32 (MTRRSVSRKRRANPGSGPGEQSDWDHSAHKRK) is disordered. 4 WD repeats span residues 132 to 173 (SHQS…PVCV), 177 to 215 (GHND…VNKS), 245 to 284 (PVNC…SKLL), and 333 to 370 (EQGS…FLED).

The protein belongs to the WD repeat DCAF12 family. In terms of assembly, component of the DCX(DCAF12) E3 ubiquitin ligase complex, at least composed of cul4 (cul4a or cul4b), ddb1, dcaf12 and rbx1.

The protein localises to the cytoplasm. It is found in the cytoskeleton. The protein resides in the microtubule organizing center. Its subcellular location is the centrosome. It localises to the nucleus. The protein operates within protein modification; protein ubiquitination. Substrate-recognition component of a DCX (DDB1-CUL4-X-box) E3 ubiquitin-protein ligase complex of the DesCEND (destruction via C-end degrons) pathway, which recognizes a C-degron located at the extreme C terminus of target proteins, leading to their ubiquitination and degradation. The C-degron recognized by the DesCEND pathway is usually a motif of less than ten residues and can be present in full-length proteins, truncated proteins or proteolytically cleaved forms. The DCX(DCAF12) complex specifically recognizes proteins with a diglutamate (Glu-Glu) at the C-terminus leading to their ubiquitination and degradation. Also directly recognizes the C-terminal glutamate-leucine (Glu-Leu) degron as an alternative degron in proteins leading to their ubiquitination and degradation. This is DDB1- and CUL4-associated factor 12-A (dcaf12-a) from Xenopus laevis (African clawed frog).